The sequence spans 264 residues: S-adenosylmethionine decarboxylase proenzyme (264 aa).

Serine 113 (schiff-base intermediate with substrate; via pyruvic acid) is an active-site residue. Serine 113 bears the Pyruvic acid (Ser); by autocatalysis mark. Histidine 118 acts as the Proton acceptor; for processing activity in catalysis. The Proton donor; for catalytic activity role is filled by cysteine 141.

It belongs to the prokaryotic AdoMetDC family. Type 2 subfamily. In terms of assembly, heterooctamer of four alpha and four beta chains arranged as a tetramer of alpha/beta heterodimers. Requires pyruvate as cofactor. Is synthesized initially as an inactive proenzyme. Formation of the active enzyme involves a self-maturation process in which the active site pyruvoyl group is generated from an internal serine residue via an autocatalytic post-translational modification. Two non-identical subunits are generated from the proenzyme in this reaction, and the pyruvate is formed at the N-terminus of the alpha chain, which is derived from the carboxyl end of the proenzyme. The post-translation cleavage follows an unusual pathway, termed non-hydrolytic serinolysis, in which the side chain hydroxyl group of the serine supplies its oxygen atom to form the C-terminus of the beta chain, while the remainder of the serine residue undergoes an oxidative deamination to produce ammonia and the pyruvoyl group blocking the N-terminus of the alpha chain.

It carries out the reaction S-adenosyl-L-methionine + H(+) = S-adenosyl 3-(methylsulfanyl)propylamine + CO2. The protein operates within amine and polyamine biosynthesis; S-adenosylmethioninamine biosynthesis; S-adenosylmethioninamine from S-adenosyl-L-methionine: step 1/1. Functionally, catalyzes the decarboxylation of S-adenosylmethionine to S-adenosylmethioninamine (dcAdoMet), the propylamine donor required for the synthesis of the polyamines spermine and spermidine from the diamine putrescine. This is S-adenosylmethionine decarboxylase proenzyme from Pseudomonas paraeruginosa (strain DSM 24068 / PA7) (Pseudomonas aeruginosa (strain PA7)).